We begin with the raw amino-acid sequence, 713 residues long: Protein tyrosine phosphatase domain-containing protein 1 (713 aa).

One can recognise a Tyrosine-protein phosphatase domain in the interval Y80–C251. C188 (phosphocysteine intermediate) is an active-site residue.

This sequence belongs to the protein-tyrosine phosphatase family. Non-receptor class PTPDC1 subfamily.

Functionally, may play roles in cilia formation and/or maintenance. This Danio rerio (Zebrafish) protein is Protein tyrosine phosphatase domain-containing protein 1 (ptpdc1).